The primary structure comprises 403 residues: Aminomethyltransferase, mitochondrial (403 aa).

The transit peptide at 1–28 directs the protein to the mitochondrion; sequence MQRAMTVVPHLGLRLQALPLALGRPLSR. Substrate-binding residues include E232, R261, and Y399.

This sequence belongs to the GcvT family. The glycine cleavage system is composed of four proteins: P, T, L and H.

It localises to the mitochondrion. It catalyses the reaction N(6)-[(R)-S(8)-aminomethyldihydrolipoyl]-L-lysyl-[protein] + (6S)-5,6,7,8-tetrahydrofolate = N(6)-[(R)-dihydrolipoyl]-L-lysyl-[protein] + (6R)-5,10-methylene-5,6,7,8-tetrahydrofolate + NH4(+). Functionally, the glycine cleavage system catalyzes the degradation of glycine. The protein is Aminomethyltransferase, mitochondrial of Canis lupus familiaris (Dog).